The sequence spans 119 residues: Large ribosomal subunit protein uL18 (119 aa).

A disordered region spans residues 1–20 (MSQIDKAARRQKIKARSRAT). A compositionally biased stretch (basic residues) spans 9–19 (RRQKIKARSRA).

This sequence belongs to the universal ribosomal protein uL18 family. Part of the 50S ribosomal subunit; part of the 5S rRNA/L5/L18/L25 subcomplex. Contacts the 5S and 23S rRNAs.

In terms of biological role, this is one of the proteins that bind and probably mediate the attachment of the 5S RNA into the large ribosomal subunit, where it forms part of the central protuberance. This is Large ribosomal subunit protein uL18 from Chlorobaculum parvum (strain DSM 263 / NCIMB 8327) (Chlorobium vibrioforme subsp. thiosulfatophilum).